Here is a 448-residue protein sequence, read N- to C-terminus: Glutamyl-tRNA reductase 2 (448 aa).

Residues 50–53 (TCER), S109, 114–116 (ESD), and Q120 contribute to the substrate site. C51 acts as the Nucleophile in catalysis. Position 190–195 (190–195 (GTGQVA)) interacts with NADP(+). The tract at residues 423–448 (DQAVPAYSPQPIGNTSNAAASATPRR) is disordered. Over residues 433–442 (PIGNTSNAAA) the composition is skewed to polar residues.

It belongs to the glutamyl-tRNA reductase family. As to quaternary structure, homodimer.

The enzyme catalyses (S)-4-amino-5-oxopentanoate + tRNA(Glu) + NADP(+) = L-glutamyl-tRNA(Glu) + NADPH + H(+). It functions in the pathway porphyrin-containing compound metabolism; protoporphyrin-IX biosynthesis; 5-aminolevulinate from L-glutamyl-tRNA(Glu): step 1/2. Catalyzes the NADPH-dependent reduction of glutamyl-tRNA(Glu) to glutamate 1-semialdehyde (GSA). In Nocardioides sp. (strain ATCC BAA-499 / JS614), this protein is Glutamyl-tRNA reductase 2.